Consider the following 270-residue polypeptide: Energy-coupling factor transporter ATP-binding protein EcfA (270 aa).

Positions Val5 to Ala238 constitute an ABC transporter domain. Residue Gly38–Ser45 participates in ATP binding.

It belongs to the ABC transporter superfamily. Energy-coupling factor EcfA family. In terms of assembly, forms a stable energy-coupling factor (ECF) transporter complex composed of 2 membrane-embedded substrate-binding proteins (S component), 2 ATP-binding proteins (A component) and 2 transmembrane proteins (T component).

It localises to the cell membrane. Functionally, ATP-binding (A) component of a common energy-coupling factor (ECF) ABC-transporter complex. Unlike classic ABC transporters this ECF transporter provides the energy necessary to transport a number of different substrates. This chain is Energy-coupling factor transporter ATP-binding protein EcfA, found in Carboxydothermus hydrogenoformans (strain ATCC BAA-161 / DSM 6008 / Z-2901).